Consider the following 300-residue polypeptide: Cation-efflux pump FieF (300 aa).

The next 4 membrane-spanning stretches (helical) occupy residues 12-32, 39-59, 82-102, and 114-134; these read AAIA…FAWW, ILAA…NLLV, AALA…LTGI, and PGVG…LVSF. The Zn(2+) site is built by Asp45 and Asp49. 2 residues coordinate Zn(2+): His153 and Asp157. 2 helical membrane-spanning segments follow: residues 156–176 and 178–198; these read SDVM…YGWH and ADAL…LRMG.

It belongs to the cation diffusion facilitator (CDF) transporter (TC 2.A.4) family. FieF subfamily. In terms of assembly, homodimer.

It localises to the cell inner membrane. It catalyses the reaction Zn(2+)(in) + H(+)(out) = Zn(2+)(out) + H(+)(in). It carries out the reaction Cd(2+)(in) + H(+)(out) = Cd(2+)(out) + H(+)(in). The catalysed reaction is Fe(2+)(in) + H(+)(out) = Fe(2+)(out) + H(+)(in). Its function is as follows. Divalent metal cation transporter which exports Zn(2+), Cd(2+) and possibly Fe(2+). May be involved in zinc and iron detoxification by efflux. This is Cation-efflux pump FieF from Shigella boydii serotype 18 (strain CDC 3083-94 / BS512).